A 333-amino-acid polypeptide reads, in one-letter code: Protein FLAP1 homolog A (333 aa).

The helical transmembrane segment at 26–46 (VVIIFVLAFTLVFTPTFEAEA) threads the bilayer. Residues 53-74 (IGGGSFRAPSAPSRSYSGPSGG) are disordered. Over residues 58–70 (FRAPSAPSRSYSG) the composition is skewed to low complexity. A run of 2 helical transmembrane segments spans residues 92 to 112 (IIPF…LVMI) and 261 to 281 (GEYI…LPAV).

The protein belongs to the FLAP family.

It localises to the cellular thylakoid membrane. The protein resides in the cell inner membrane. In terms of biological role, essential for photosynthetic growth under fluctuating light by modulating PxcA- and PxcL-dependent intracellular pH regulation via proton transport (e.g. transient pH reduction upon transition from dark to light followed by an increase in the light until light-to-dark shift). The protein is Protein FLAP1 homolog A of Synechocystis sp. (strain ATCC 27184 / PCC 6803 / Kazusa).